The chain runs to 236 residues: 2-C-methyl-D-erythritol 4-phosphate cytidylyltransferase (236 aa).

Belongs to the IspD/TarI cytidylyltransferase family. IspD subfamily.

It carries out the reaction 2-C-methyl-D-erythritol 4-phosphate + CTP + H(+) = 4-CDP-2-C-methyl-D-erythritol + diphosphate. The protein operates within isoprenoid biosynthesis; isopentenyl diphosphate biosynthesis via DXP pathway; isopentenyl diphosphate from 1-deoxy-D-xylulose 5-phosphate: step 2/6. Catalyzes the formation of 4-diphosphocytidyl-2-C-methyl-D-erythritol from CTP and 2-C-methyl-D-erythritol 4-phosphate (MEP). The polypeptide is 2-C-methyl-D-erythritol 4-phosphate cytidylyltransferase (Paraburkholderia phymatum (strain DSM 17167 / CIP 108236 / LMG 21445 / STM815) (Burkholderia phymatum)).